A 68-amino-acid polypeptide reads, in one-letter code: Long neurotoxin 1 (68 aa).

5 disulfides stabilise this stretch: Cys-3–Cys-20, Cys-13–Cys-41, Cys-26–Cys-30, Cys-45–Cys-56, and Cys-57–Cys-62.

This sequence belongs to the three-finger toxin family. Long-chain subfamily. Type II alpha-neurotoxin sub-subfamily. As to expression, expressed by the venom gland.

It is found in the secreted. Its function is as follows. Binds with high affinity to muscular (alpha-1/CHRNA1) and neuronal (alpha-7/CHRNA7) nicotinic acetylcholine receptor (nAChR) and inhibits acetylcholine from binding to the receptor, thereby impairing neuromuscular and neuronal transmission. The sequence is that of Long neurotoxin 1 from Aspidelaps scutatus (Shield-nose snake).